A 269-amino-acid polypeptide reads, in one-letter code: MELLIKAFIMGIVEGLTEFLPISSTGHLIIVGKFIHFTGNFATMFEIVIQLGAILAVVFHYRKKIFASLKNLKPGSWGFNLWFKIFIAFIPAAVIGLLTHKYIEEHLFSPFTVAIALIAGAIMMIVIEDTFGKRYKIDNMDKVDTKKSLLIGIAQVMSLFPGMSRSASTIMGGMLAGLSVKAAAEFSFFLAIPTMFAATTLSLLKGFSAMSLLEWQALAVGFITSFLTALFVVDKFLSYLTRHSLKPFAYYRLAVGVLMILLVAEKIVK.

Transmembrane regions (helical) follow at residues 41-61 (FATMFEIVIQLGAILAVVFHY), 78-98 (GFNLWFKIFIAFIPAAVIGLL), 107-127 (LFSPFTVAIALIAGAIMMIVI), 148-167 (SLLIGIAQVMSLFPGMSRSA), 184-204 (AEFSFFLAIPTMFAATTLSLL), 213-233 (LEWQALAVGFITSFLTALFVV), and 248-268 (FAYYRLAVGVLMILLVAEKIV).

Belongs to the UppP family.

The protein resides in the cell membrane. It carries out the reaction di-trans,octa-cis-undecaprenyl diphosphate + H2O = di-trans,octa-cis-undecaprenyl phosphate + phosphate + H(+). Catalyzes the dephosphorylation of undecaprenyl diphosphate (UPP). Confers resistance to bacitracin. This chain is Undecaprenyl-diphosphatase, found in Thermoanaerobacter pseudethanolicus (strain ATCC 33223 / 39E) (Clostridium thermohydrosulfuricum).